The chain runs to 139 residues: Transcription antitermination protein NusB (139 aa).

It belongs to the NusB family.

Functionally, involved in transcription antitermination. Required for transcription of ribosomal RNA (rRNA) genes. Binds specifically to the boxA antiterminator sequence of the ribosomal RNA (rrn) operons. This is Transcription antitermination protein NusB from Idiomarina loihiensis (strain ATCC BAA-735 / DSM 15497 / L2-TR).